A 503-amino-acid polypeptide reads, in one-letter code: Probable protein kinase UbiB (503 aa).

A helical membrane pass occupies residues 13-35 (TFYRYRLAGLCASLMGSGWICAL). Residues 120–491 (EFETEPIASA…QQRQSLWLAV (372 aa)) form the Protein kinase domain. ATP-binding positions include 126–134 (IASASIAQV) and lysine 148. Catalysis depends on aspartate 283, which acts as the Proton acceptor. Residues 485–502 (QSLWLAVIAVVLLLILLL) traverse the membrane as a helical segment.

The protein belongs to the ABC1 family. UbiB subfamily.

The protein resides in the cell inner membrane. The protein operates within cofactor biosynthesis; ubiquinone biosynthesis [regulation]. Its function is as follows. Is probably a protein kinase regulator of UbiI activity which is involved in aerobic coenzyme Q (ubiquinone) biosynthesis. The chain is Probable protein kinase UbiB from Neisseria meningitidis serogroup B (strain ATCC BAA-335 / MC58).